Consider the following 1082-residue polypeptide: Carbamoyl phosphate synthase large chain (1082 aa).

The tract at residues 1-401 (MPKDKALKKV…ALLKAVRSLE (401 aa)) is carboxyphosphate synthetic domain. ATP-binding residues include R129, R169, G175, G176, K208, V210, E215, G241, I242, H243, Q284, and E298. The 195-residue stretch at 133 to 327 (KNMCLEIGEP…IAKVATKVAV (195 aa)) folds into the ATP-grasp 1 domain. The Mg(2+) site is built by Q284, E298, and N300. Residues Q284, E298, and N300 each coordinate Mn(2+). Residues 402–561 (TGVTGMNLPE…YSTYEDEDEA (160 aa)) are oligomerization domain. The interval 562–944 (EPQAVRKVVV…ALYKACLSAG (383 aa)) is carbamoyl phosphate synthetic domain. The 191-residue stretch at 686-876 (DQLVAELGIP…MVNLATRICL (191 aa)) folds into the ATP-grasp 2 domain. Residues R722, K761, L763, E767, G792, I793, H794, S795, Q835, and E847 each contribute to the ATP site. Q835, E847, and N849 together coordinate Mg(2+). The Mn(2+) site is built by Q835, E847, and N849. Positions 945-1082 (YTLPSSGKAV…PLIPLQEYVS (138 aa)) constitute an MGS-like domain. The tract at residues 945–1082 (YTLPSSGKAV…PLIPLQEYVS (138 aa)) is allosteric domain.

Belongs to the CarB family. As to quaternary structure, composed of two chains; the small (or glutamine) chain promotes the hydrolysis of glutamine to ammonia, which is used by the large (or ammonia) chain to synthesize carbamoyl phosphate. Tetramer of heterodimers (alpha,beta)4. Requires Mg(2+) as cofactor. It depends on Mn(2+) as a cofactor.

It carries out the reaction hydrogencarbonate + L-glutamine + 2 ATP + H2O = carbamoyl phosphate + L-glutamate + 2 ADP + phosphate + 2 H(+). The enzyme catalyses hydrogencarbonate + NH4(+) + 2 ATP = carbamoyl phosphate + 2 ADP + phosphate + 2 H(+). The protein operates within amino-acid biosynthesis; L-arginine biosynthesis; carbamoyl phosphate from bicarbonate: step 1/1. It participates in pyrimidine metabolism; UMP biosynthesis via de novo pathway; (S)-dihydroorotate from bicarbonate: step 1/3. In terms of biological role, large subunit of the glutamine-dependent carbamoyl phosphate synthetase (CPSase). CPSase catalyzes the formation of carbamoyl phosphate from the ammonia moiety of glutamine, carbonate, and phosphate donated by ATP, constituting the first step of 2 biosynthetic pathways, one leading to arginine and/or urea and the other to pyrimidine nucleotides. The large subunit (synthetase) binds the substrates ammonia (free or transferred from glutamine from the small subunit), hydrogencarbonate and ATP and carries out an ATP-coupled ligase reaction, activating hydrogencarbonate by forming carboxy phosphate which reacts with ammonia to form carbamoyl phosphate. The sequence is that of Carbamoyl phosphate synthase large chain from Desulforudis audaxviator (strain MP104C).